A 242-amino-acid chain; its full sequence is Small ribosomal subunit protein uS3 (242 aa).

The region spanning 39–110 is the KH type-2 domain; sequence IRRFIHKKYG…QVRINVVEVE (72 aa). Residues 216-242 form a disordered region; the sequence is QSMPVGASPRRRGNRRPQQFEDRSNEG. The span at 233-242 shows a compositional bias: basic and acidic residues; that stretch reads QQFEDRSNEG.

This sequence belongs to the universal ribosomal protein uS3 family. As to quaternary structure, part of the 30S ribosomal subunit. Forms a tight complex with proteins S10 and S14.

In terms of biological role, binds the lower part of the 30S subunit head. Binds mRNA in the 70S ribosome, positioning it for translation. This chain is Small ribosomal subunit protein uS3, found in Prochlorococcus marinus (strain MIT 9303).